Consider the following 460-residue polypeptide: Diguanylate cyclase DosC (460 aa).

Residue His-98 coordinates heme. The GGDEF domain maps to 325–458; sequence TPLSVLIIDV…GRNRVELWKA (134 aa). Residue Asp-333 participates in Mg(2+) binding. The substrate site is built by Asn-341 and Asp-350. Residue Asp-376 participates in Mg(2+) binding. The Proton acceptor role is filled by Asp-376.

Heme serves as cofactor. Requires Mg(2+) as cofactor.

The catalysed reaction is 2 GTP = 3',3'-c-di-GMP + 2 diphosphate. It participates in purine metabolism; 3',5'-cyclic di-GMP biosynthesis. Functionally, globin-coupled heme-based oxygen sensor protein displaying diguanylate cyclase (DGC) activity in response to oxygen availability. Thus, catalyzes the synthesis of cyclic diguanylate (c-di-GMP) via the condensation of 2 GTP molecules. Cyclic-di-GMP is a second messenger which controls cell surface-associated traits in bacteria. In Shigella sonnei (strain Ss046), this protein is Diguanylate cyclase DosC (dosC).